The following is a 474-amino-acid chain: Lactococcin A secretion protein LcnD (474 aa).

At 1–21 the chain is on the cytoplasmic side; it reads MFDKKLLESSELYDKRYRNFS. Residues 22–44 traverse the membrane as a helical segment; sequence TLIILPLFILLVGGVIFTFFAHK. Residues 45-474 are Extracellular-facing; sequence ELTVISTGSI…LDKIMGRGNQ (430 aa).

This sequence belongs to the membrane fusion protein (MFP) (TC 8.A.1) family.

It is found in the cell membrane. In terms of biological role, involved in the secretion of lactococcin A. The polypeptide is Lactococcin A secretion protein LcnD (lcnD) (Lactococcus lactis subsp. cremoris (Streptococcus cremoris)).